Here is a 95-residue protein sequence, read N- to C-terminus: Homeotic protein bicoid (95 aa).

2 disordered regions span residues 1–29 and 42–63; these read NLEP…STGM and GKPS…MMHD.

It belongs to the paired homeobox family. Bicoid subfamily.

It is found in the nucleus. Its function is as follows. Bicoid is polarity protein that provides positional cues for the development of head and thoracic segments. BCD regulates the expression of zygotic genes, possibly through its homeodomain, and inhibits the activity of other maternal gene products. This is Homeotic protein bicoid (bcd) from Drosophila subobscura (Fruit fly).